Consider the following 559-residue polypeptide: O-fucosyltransferase 37 (559 aa).

A helical; Signal-anchor for type II membrane protein membrane pass occupies residues 53-73 (FFLLLISLSLVFSGISFLTFS). N126 carries an N-linked (GlcNAc...) asparagine glycan. 331–333 (HLR) lines the substrate pocket. Residues N372, N403, N447, and N504 are each glycosylated (N-linked (GlcNAc...) asparagine).

It belongs to the glycosyltransferase GT106 family.

Its subcellular location is the membrane. Its pathway is glycan metabolism. This is O-fucosyltransferase 37 from Arabidopsis thaliana (Mouse-ear cress).